The sequence spans 208 residues: LexA repressor (208 aa).

Positions 29–49 form a DNA-binding region, H-T-H motif; it reads IREIGDSLNINSTSTVHNNIL. Catalysis depends on for autocatalytic cleavage activity residues S131 and K168.

This sequence belongs to the peptidase S24 family. In terms of assembly, homodimer.

The enzyme catalyses Hydrolysis of Ala-|-Gly bond in repressor LexA.. In terms of biological role, represses a number of genes involved in the response to DNA damage (SOS response), including recA and lexA. In the presence of single-stranded DNA, RecA interacts with LexA causing an autocatalytic cleavage which disrupts the DNA-binding part of LexA, leading to derepression of the SOS regulon and eventually DNA repair. The protein is LexA repressor of Finegoldia magna (strain ATCC 29328 / DSM 20472 / WAL 2508) (Peptostreptococcus magnus).